The sequence spans 382 residues: Ubiquitin-like protease 4 (382 aa).

Positions 46–106 are disordered; that stretch reads GTHLDGSIGE…DNDEWTNQKR (61 aa). Acidic residues predominate over residues 84–100; that stretch reads DLVDEDEEEEDEEDNDE.

This sequence belongs to the peptidase C48 family. As to expression, expressed in hermaphrodite-specific neurons, head muscles, body wall muscles and pharyngeal cells.

The protein localises to the cytoplasm. Its subcellular location is the cytoskeleton. The protein resides in the microtubule organizing center. It localises to the centrosome. It is found in the nucleus. The protein localises to the mitochondrion matrix. It functions in the pathway protein modification; protein sumoylation. Protease required for deconjugation of smo-1 conjugates from target proteins which is necessary for cell cycle progression. Required for respiration and the maintenance of normal mitochondrial homeostasis. In response to mitochondrial stress, required for the removal of smo-1 conjugates from the transcription factor dve-1, which promotes the translocation of dve-1 from the cytosol to the nucleus to initiate the mitochondrial unfolded protein response. Furthermore, removes the smo-1 conjugates from the transcription factor atfs-1 to promote its stability and activate the mitochondrial unfolded protein response. Also plays a role in promoting mitochondrial unfolded protein response-mediated innate immunity following infection with P.aeruginosa. This chain is Ubiquitin-like protease 4, found in Caenorhabditis elegans.